A 57-amino-acid chain; its full sequence is Large ribosomal subunit protein bL32 (57 aa).

Residues 1–19 (MAVPKRRMSRSNTRSRRSQ) are compositionally biased toward basic residues. Residues 1 to 21 (MAVPKRRMSRSNTRSRRSQWK) form a disordered region.

Belongs to the bacterial ribosomal protein bL32 family.

This is Large ribosomal subunit protein bL32 from Mycobacteroides abscessus (strain ATCC 19977 / DSM 44196 / CCUG 20993 / CIP 104536 / JCM 13569 / NCTC 13031 / TMC 1543 / L948) (Mycobacterium abscessus).